The sequence spans 94 residues: Integration host factor subunit beta (94 aa).

Belongs to the bacterial histone-like protein family. In terms of assembly, heterodimer of an alpha and a beta chain.

This protein is one of the two subunits of integration host factor, a specific DNA-binding protein that functions in genetic recombination as well as in transcriptional and translational control. The chain is Integration host factor subunit beta from Edwardsiella ictaluri (strain 93-146).